Consider the following 863-residue polypeptide: DNA mismatch repair protein MutS (863 aa).

607 to 614 (GPNMAGKS) serves as a coordination point for ATP.

The protein belongs to the DNA mismatch repair MutS family.

In terms of biological role, this protein is involved in the repair of mismatches in DNA. It is possible that it carries out the mismatch recognition step. This protein has a weak ATPase activity. The polypeptide is DNA mismatch repair protein MutS (Caldicellulosiruptor saccharolyticus (strain ATCC 43494 / DSM 8903 / Tp8T 6331)).